The primary structure comprises 2386 residues: Protein kinase rad3 (2386 aa).

Residues 1386 to 1943 (TLGIVSLNCG…LWQLMATIKS (558 aa)) enclose the FAT domain. In terms of domain architecture, PI3K/PI4K catalytic spans 2052–2370 (FEDEVDIMNS…QIQELIKSAV (319 aa)). Residues 2058 to 2064 (IMNSLQK) form a G-loop region. A catalytic loop region spans residues 2227 to 2235 (GLGDRHGEN). Residues 2247 to 2271 (HVDFNCLFDKGLTFEKPEKVPFRLT) are activation loop. The 33-residue stretch at 2354-2386 (IPLSIEGQIQELIKSAVNPKNLVEMYIGWAAYF) folds into the FATC domain.

This sequence belongs to the PI3/PI4-kinase family. ATM subfamily. In terms of assembly, interacts with crb2 (via BRCT domain). Interacts with chk1.

The protein localises to the nucleus. It catalyses the reaction L-seryl-[protein] + ATP = O-phospho-L-seryl-[protein] + ADP + H(+). It carries out the reaction L-threonyl-[protein] + ATP = O-phospho-L-threonyl-[protein] + ADP + H(+). Functionally, serine/threonine kinase which activates checkpoint signaling upon genotoxic stresses. Involved in G2 arrest following DNA damage where it phosphorylates chk1. Phosphorylation of 'Thr-73' and 'Ser-80' of checkpoint mediator crb2 promotes its interaction with chk1. It is also involved in the dependence of mitosis on the completion of DNA replication. In Schizosaccharomyces pombe (strain 972 / ATCC 24843) (Fission yeast), this protein is Protein kinase rad3 (rad3).